Here is a 311-residue protein sequence, read N- to C-terminus: Putative ribose-phosphate pyrophosphokinase 2 (311 aa).

ATP-binding positions include 38 to 40 (DGE) and 97 to 98 (RQ). 2 residues coordinate Mg(2+): His-131 and Asp-171. Residue Asp-219 coordinates D-ribose 5-phosphate.

Belongs to the ribose-phosphate pyrophosphokinase family. Class I subfamily. As to quaternary structure, homohexamer. The cofactor is Mg(2+).

The protein localises to the cytoplasm. The catalysed reaction is D-ribose 5-phosphate + ATP = 5-phospho-alpha-D-ribose 1-diphosphate + AMP + H(+). Its pathway is metabolic intermediate biosynthesis; 5-phospho-alpha-D-ribose 1-diphosphate biosynthesis; 5-phospho-alpha-D-ribose 1-diphosphate from D-ribose 5-phosphate (route I): step 1/1. Involved in the biosynthesis of the central metabolite phospho-alpha-D-ribosyl-1-pyrophosphate (PRPP) via the transfer of pyrophosphoryl group from ATP to 1-hydroxyl of ribose-5-phosphate (Rib-5-P). The protein is Putative ribose-phosphate pyrophosphokinase 2 of Listeria innocua serovar 6a (strain ATCC BAA-680 / CLIP 11262).